Reading from the N-terminus, the 288-residue chain is MSTYFIGDIHGCYDELQTILEKVAFDPLIDTLWLTGDLVARGPSSLEVLRMIRRLGNSVRIVLGNHDLHLLAVYTGIMRNRIKDHTIPLLTAPDAEDLMNWLRYQPVLQVDNKKKILMAHAGITPQWNIDTALQCASEIETVLRSESYPLFLHSIYEDIPNYWSNELSYRARLQFSTNVFTRMRYCFPNGKLDMLCKDIPNKAPEPLRPWFNLPSTIVEKYSIIFGHWSSLLGKGTPTGIYGLDTGCCWGGKLTLLCWEDKKIIQIPSQKKRNKKCSYLCYNGKGKKN.

This sequence belongs to the Ap4A hydrolase family.

It catalyses the reaction P(1),P(4)-bis(5'-adenosyl) tetraphosphate + H2O = 2 ADP + 2 H(+). Hydrolyzes diadenosine 5',5'''-P1,P4-tetraphosphate to yield ADP. The polypeptide is Bis(5'-nucleosyl)-tetraphosphatase, symmetrical (Baumannia cicadellinicola subsp. Homalodisca coagulata).